The primary structure comprises 427 residues: Glutamate-1-semialdehyde 2,1-aminomutase (427 aa).

The residue at position 267 (K267) is an N6-(pyridoxal phosphate)lysine.

The protein belongs to the class-III pyridoxal-phosphate-dependent aminotransferase family. HemL subfamily. As to quaternary structure, homodimer. It depends on pyridoxal 5'-phosphate as a cofactor.

The protein localises to the cytoplasm. It carries out the reaction (S)-4-amino-5-oxopentanoate = 5-aminolevulinate. Its pathway is porphyrin-containing compound metabolism; protoporphyrin-IX biosynthesis; 5-aminolevulinate from L-glutamyl-tRNA(Glu): step 2/2. The polypeptide is Glutamate-1-semialdehyde 2,1-aminomutase (Thermodesulfovibrio yellowstonii (strain ATCC 51303 / DSM 11347 / YP87)).